The primary structure comprises 261 residues: Cytochrome c oxidase subunit 3 (261 aa).

Over 1 to 15 the chain is Mitochondrial matrix; sequence MAHQAHAYHMVDPSP. A helical transmembrane segment spans residues 16 to 34; sequence WPLTGAIAALLLTSGTAVW. The Mitochondrial intermembrane segment spans residues 35-40; the sequence is FHFHSL. A helical transmembrane segment spans residues 41–66; that stretch reads TLLTLGNVLLLLTMYQWWRDIIREGT. Over 67–72 the chain is Mitochondrial matrix; the sequence is FQGHHT. Residues 73-105 form a helical membrane-spanning segment; the sequence is PPVQKGLRYGMILFITSEVFFFLGFFWAFYHAS. Topologically, residues 106 to 128 are mitochondrial intermembrane; it reads LAPTPELGGCWPPTGITTLDPFE. Residues 129–152 traverse the membrane as a helical segment; the sequence is VPLLNTAVLLASGVTVTWAHHSIM. Residues 153 to 155 are Mitochondrial matrix-facing; the sequence is EGE. A helical membrane pass occupies residues 156–183; the sequence is RKQTIQALTLTILLGFYFTFLQGMEYYE. Over 184–190 the chain is Mitochondrial intermembrane; that stretch reads APFTIAD. Residues 191 to 223 traverse the membrane as a helical segment; it reads GVYGSTFFVATGFHGLHVIIGSTFLAVCLLRQV. At 224–232 the chain is on the mitochondrial matrix side; that stretch reads QYHFTSEHH. The chain crosses the membrane as a helical span at residues 233-256; the sequence is FGFEAAAWYWHFVDVVWLFLYVSI. Topologically, residues 257-261 are mitochondrial intermembrane; it reads YWWGS.

Belongs to the cytochrome c oxidase subunit 3 family. As to quaternary structure, component of the cytochrome c oxidase (complex IV, CIV), a multisubunit enzyme composed of 14 subunits. The complex is composed of a catalytic core of 3 subunits MT-CO1, MT-CO2 and MT-CO3, encoded in the mitochondrial DNA, and 11 supernumerary subunits COX4I, COX5A, COX5B, COX6A, COX6B, COX6C, COX7A, COX7B, COX7C, COX8 and NDUFA4, which are encoded in the nuclear genome. The complex exists as a monomer or a dimer and forms supercomplexes (SCs) in the inner mitochondrial membrane with NADH-ubiquinone oxidoreductase (complex I, CI) and ubiquinol-cytochrome c oxidoreductase (cytochrome b-c1 complex, complex III, CIII), resulting in different assemblies (supercomplex SCI(1)III(2)IV(1) and megacomplex MCI(2)III(2)IV(2)).

It is found in the mitochondrion inner membrane. The catalysed reaction is 4 Fe(II)-[cytochrome c] + O2 + 8 H(+)(in) = 4 Fe(III)-[cytochrome c] + 2 H2O + 4 H(+)(out). In terms of biological role, component of the cytochrome c oxidase, the last enzyme in the mitochondrial electron transport chain which drives oxidative phosphorylation. The respiratory chain contains 3 multisubunit complexes succinate dehydrogenase (complex II, CII), ubiquinol-cytochrome c oxidoreductase (cytochrome b-c1 complex, complex III, CIII) and cytochrome c oxidase (complex IV, CIV), that cooperate to transfer electrons derived from NADH and succinate to molecular oxygen, creating an electrochemical gradient over the inner membrane that drives transmembrane transport and the ATP synthase. Cytochrome c oxidase is the component of the respiratory chain that catalyzes the reduction of oxygen to water. Electrons originating from reduced cytochrome c in the intermembrane space (IMS) are transferred via the dinuclear copper A center (CU(A)) of subunit 2 and heme A of subunit 1 to the active site in subunit 1, a binuclear center (BNC) formed by heme A3 and copper B (CU(B)). The BNC reduces molecular oxygen to 2 water molecules using 4 electrons from cytochrome c in the IMS and 4 protons from the mitochondrial matrix. This chain is Cytochrome c oxidase subunit 3 (mt-co3), found in Oncorhynchus masou (Cherry salmon).